The sequence spans 168 residues: uncharacterized protein (168 aa).

2 CBS domains span residues 20–77 and 117–168; these read IMKK…NEDL and MTRK…EALI.

This is an uncharacterized protein from Methanocaldococcus jannaschii (strain ATCC 43067 / DSM 2661 / JAL-1 / JCM 10045 / NBRC 100440) (Methanococcus jannaschii).